The chain runs to 936 residues: E3 ubiquitin-protein ligase ZNRF3 (936 aa).

The segment at 1–31 (MRPRSGGRPGATGRRRRRLRRRPRGLRCSRL) is disordered. Positions 1 to 55 (MRPRSGGRPGATGRRRRRLRRRPRGLRCSRLPPPPPLPLLLGLLLAAAGPGAARA) are cleaved as a signal peptide. A compositionally biased stretch (basic residues) spans 13 to 27 (GRRRRRLRRRPRGLR). The Extracellular portion of the chain corresponds to 56–219 (KETAFVEVVL…PRQPTEYFDM (164 aa)). Residues 220–240 (GIFLAFFVVVSLVCLILLVKI) traverse the membrane as a helical segment. The Cytoplasmic segment spans residues 241 to 936 (KLKQRRSQNS…HSADSSSPGA (696 aa)). Residues 293-334 (CAICLEKYIDGEELRVIPCTHRFHRKCVDPWLLQHHTCPHCR) form an RING-type; atypical zinc finger. Disordered stretches follow at residues 608 to 693 (SEAG…SPGA), 739 to 758 (LYEGSGPAGGEPQSGSSQGL), 849 to 875 (THSLGSWGGTRGPDTPRPHRGLGATRE), and 892 to 936 (CPPE…SPGA). The segment covering 654-684 (SGDQVSTCSLEMNYSSNSSLEHRGPNSSTSE) has biased composition (polar residues). Over residues 913-922 (ESSTTATEAA) the composition is skewed to low complexity.

This sequence belongs to the ZNRF3 family. In terms of assembly, interacts with LRP6, FZD4, FZD5, FZD6 and FZD8. Interacts with RSPO1; interaction promotes indirect interaction with LGR4 and membrane clearance of ZNRF3. Also interacts with RSPO2. Interacts with LMBR1L.

The protein localises to the cell membrane. The catalysed reaction is S-ubiquitinyl-[E2 ubiquitin-conjugating enzyme]-L-cysteine + [acceptor protein]-L-lysine = [E2 ubiquitin-conjugating enzyme]-L-cysteine + N(6)-ubiquitinyl-[acceptor protein]-L-lysine.. Its pathway is protein modification; protein ubiquitination. With respect to regulation, negatively regulated by R-spondin proteins such as RSPO1: interaction with RSPO1 induces the indirect association between ZNRF3 and LGR4, promoting membrane clearance of ZNRF3. In terms of biological role, E3 ubiquitin-protein ligase that acts as a negative regulator of the Wnt signaling pathway by mediating the ubiquitination and subsequent degradation of Wnt receptor complex components Frizzled and LRP6. Acts on both canonical and non-canonical Wnt signaling pathway. Acts as a tumor suppressor in the intestinal stem cell zone by inhibiting the Wnt signaling pathway, thereby restricting the size of the intestinal stem cell zone. Along with RSPO2 and RNF43, constitutes a master switch that governs limb specification. The protein is E3 ubiquitin-protein ligase ZNRF3 (ZNRF3) of Homo sapiens (Human).